Consider the following 259-residue polypeptide: ATP synthase subunit a (259 aa).

5 helical membrane-spanning segments follow: residues T29 to F49, I90 to I110, D134 to I154, L208 to P228, and A230 to V250.

This sequence belongs to the ATPase A chain family. In terms of assembly, F-type ATPases have 2 components, CF(1) - the catalytic core - and CF(0) - the membrane proton channel. CF(1) has five subunits: alpha(3), beta(3), gamma(1), delta(1), epsilon(1). CF(0) has three main subunits: a(1), b(2) and c(9-12). The alpha and beta chains form an alternating ring which encloses part of the gamma chain. CF(1) is attached to CF(0) by a central stalk formed by the gamma and epsilon chains, while a peripheral stalk is formed by the delta and b chains.

The protein localises to the cell inner membrane. Functionally, key component of the proton channel; it plays a direct role in the translocation of protons across the membrane. This is ATP synthase subunit a from Aeromonas salmonicida (strain A449).